Here is a 430-residue protein sequence, read N- to C-terminus: Histidine--tRNA ligase (430 aa).

The protein belongs to the class-II aminoacyl-tRNA synthetase family. Homodimer.

The protein localises to the cytoplasm. The enzyme catalyses tRNA(His) + L-histidine + ATP = L-histidyl-tRNA(His) + AMP + diphosphate + H(+). The protein is Histidine--tRNA ligase of Chlamydia abortus (strain DSM 27085 / S26/3) (Chlamydophila abortus).